Reading from the N-terminus, the 235-residue chain is Pro-opiomelanocortin (235 aa).

A signal peptide spans 1–26; that stretch reads MPRFCNSRSGALLLALLLQTSIDVWS. Phenylalanine 87 is modified (phenylalanine amide). The interval 88–128 is disordered; it reads GPRNSSSAGGSAQRRAEEETAGGDGRPEPSPREGKRSYSME. Positions 112-128 are enriched in basic and acidic residues; sequence GRPEPSPREGKRSYSME. Serine 124 bears the N-acetylserine; in Corticotropin mark. At valine 136 the chain carries Valine amide. A glycan (N-linked (GlcNAc...) asparagine) is linked at asparagine 152. Serine 154 carries the post-translational modification Phosphoserine. The disordered stretch occupies residues 169 to 209; sequence EQPDGLEQVLEPDTEKADGPYRVEHFRWGNPPKDKRYGGFM. Positions 181 to 205 are enriched in basic and acidic residues; the sequence is DTEKADGPYRVEHFRWGNPPKDKRY.

This sequence belongs to the POMC family. Post-translationally, specific enzymatic cleavages at paired basic residues yield the different active peptides. In terms of tissue distribution, ACTH and MSH are produced by the pituitary gland.

The protein resides in the secreted. Its function is as follows. Stimulates the adrenal glands to release cortisol. In terms of biological role, anorexigenic peptide. Increases the pigmentation of skin by increasing melanin production in melanocytes. Functionally, increases the pigmentation of skin by increasing melanin production in melanocytes. Endogenous orexigenic opiate. Its function is as follows. Endogenous opiate. This chain is Pro-opiomelanocortin (Pomc), found in Rattus norvegicus (Rat).